The sequence spans 1199 residues: Pyruvate-flavodoxin oxidoreductase (1199 aa).

4Fe-4S ferredoxin-type domains lie at 699–728 (EIPV…AKVY) and 755–784 (FTIQ…EPSL). 12 residues coordinate [4Fe-4S] cluster: C708, C711, C714, C718, C764, C767, C770, C774, C838, C841, C866, and C1103.

The protein belongs to the pyruvate:ferredoxin/flavodoxin oxidoreductase family. Requires [4Fe-4S] cluster as cofactor.

It carries out the reaction oxidized [flavodoxin] + pyruvate + CoA + 2 H(+) = reduced [flavodoxin] + acetyl-CoA + CO2. Functionally, oxidoreductase required for the transfer of electrons from pyruvate to flavodoxin, which reduces nitrogenase. This is Pyruvate-flavodoxin oxidoreductase (nifJ) from Nostoc sp. (strain PCC 7120 / SAG 25.82 / UTEX 2576).